A 282-amino-acid chain; its full sequence is MSLFEAIILGIAQGLTEFLPISSTAHLRIVPALAGWQDPGAAFTAIVQIGTLIAVLIYFFRDIVTISGAVIKGLMNASPLGTPDAKMGWMIAAGTIPIVVFGLLFKTEIETSLRSLYWISAALITLAIILSLAEWLIKKRIAKGIEPKSMSDIRWKEALIIGLVQSIALIPGSSRSGVTITGGLFMNLSRETAARFSFLLSLPAVFAAGIYQLYKSWDSLMASTNDLVNLIVATLVAGIVGYASIAFLITFLKQHSTAVFIIYRIALGLTILALIATGNVQA.

A run of 7 helical transmembrane segments spans residues 40–60 (GAAF…IYFF), 85–105 (AKMG…GLLF), 117–137 (YWIS…EWLI), 158–178 (ALII…RSGV), 193–213 (AARF…IYQL), 231–251 (IVAT…LITF), and 258–278 (AVFI…IATG).

This sequence belongs to the UppP family.

Its subcellular location is the cell inner membrane. The enzyme catalyses di-trans,octa-cis-undecaprenyl diphosphate + H2O = di-trans,octa-cis-undecaprenyl phosphate + phosphate + H(+). Its function is as follows. Catalyzes the dephosphorylation of undecaprenyl diphosphate (UPP). Confers resistance to bacitracin. The chain is Undecaprenyl-diphosphatase from Prosthecochloris aestuarii (strain DSM 271 / SK 413).